The primary structure comprises 126 residues: MIKEIHTHKSPKPIGPYSQAIQIKNFTFLSGQISQTDNINTNISFQTQSILQNINYILESKEMNVGNIVKTTIFITNLNDLTIVNDVYQKFFLKYTKTFPARSCVEVSKLPKNAKIEIDAIAYKNK.

It belongs to the RutC family.

The sequence is that of RutC family protein bbp_334 from Buchnera aphidicola subsp. Baizongia pistaciae (strain Bp).